The sequence spans 120 residues: UPF0102 protein FRAAL5785 (120 aa).

It belongs to the UPF0102 family.

The sequence is that of UPF0102 protein FRAAL5785 from Frankia alni (strain DSM 45986 / CECT 9034 / ACN14a).